A 510-amino-acid polypeptide reads, in one-letter code: Glycerol kinase (510 aa).

Thr-12 contacts ADP. ATP-binding residues include Thr-12, Thr-13, and Ser-14. Thr-12 provides a ligand contact to sn-glycerol 3-phosphate. Arg-16 is a binding site for ADP. Positions 82, 83, and 134 each coordinate sn-glycerol 3-phosphate. Glycerol is bound by residues Arg-82, Glu-83, and Tyr-134. At His-230 the chain carries Phosphohistidine; by HPr. Asp-244 lines the sn-glycerol 3-phosphate pocket. Residues Asp-244 and Gln-245 each contribute to the glycerol site. ADP contacts are provided by Thr-266 and Gly-309. Residues Thr-266, Gly-309, Gln-313, and Gly-410 each coordinate ATP. Gly-410 and Asn-414 together coordinate ADP.

Belongs to the FGGY kinase family. In terms of assembly, homotetramer and homodimer (in equilibrium). Post-translationally, the phosphoenolpyruvate-dependent sugar phosphotransferase system (PTS), including enzyme I, and histidine-containing protein (HPr) are required for the phosphorylation, which leads to the activation of the enzyme.

The catalysed reaction is glycerol + ATP = sn-glycerol 3-phosphate + ADP + H(+). It participates in polyol metabolism; glycerol degradation via glycerol kinase pathway; sn-glycerol 3-phosphate from glycerol: step 1/1. Activated by phosphorylation and inhibited by fructose 1,6-bisphosphate (FBP). In terms of biological role, key enzyme in the regulation of glycerol uptake and metabolism. Catalyzes the phosphorylation of glycerol to yield sn-glycerol 3-phosphate. This chain is Glycerol kinase, found in Bacillus cereus (strain ATCC 10987 / NRS 248).